The sequence spans 170 residues: UPF0690 protein C1orf52 homolog (170 aa).

Disordered regions lie at residues 1 to 56 (MAAE…PDEL) and 124 to 170 (SNVY…KRKV). Basic and acidic residues predominate over residues 46-56 (DTKKLPGPDEL). A compositionally biased stretch (acidic residues) spans 144–159 (EEEEAREDSPPSDDEQ).

It belongs to the UPF0690 family.

The sequence is that of UPF0690 protein C1orf52 homolog from Xenopus tropicalis (Western clawed frog).